Consider the following 1296-residue polypeptide: DNA-directed RNA polymerase subunit beta' (1296 aa).

Positions 60, 62, 75, and 78 each coordinate Zn(2+). A disordered region spans residues 188–209; that stretch reads GAKGDARRKVRESAEREMRQIR. Asp-535, Asp-537, and Asp-539 together coordinate Mg(2+). Positions 877, 954, 961, and 964 each coordinate Zn(2+).

Belongs to the RNA polymerase beta' chain family. In terms of assembly, the RNAP catalytic core consists of 2 alpha, 1 beta, 1 beta' and 1 omega subunit. When a sigma factor is associated with the core the holoenzyme is formed, which can initiate transcription. Mg(2+) serves as cofactor. Zn(2+) is required as a cofactor.

The catalysed reaction is RNA(n) + a ribonucleoside 5'-triphosphate = RNA(n+1) + diphosphate. In terms of biological role, DNA-dependent RNA polymerase catalyzes the transcription of DNA into RNA using the four ribonucleoside triphosphates as substrates. The sequence is that of DNA-directed RNA polymerase subunit beta' from Parafrankia sp. (strain EAN1pec).